A 208-amino-acid chain; its full sequence is Methylthioribulose-1-phosphate dehydratase (208 aa).

Residues His96 and His98 each contribute to the Zn(2+) site.

The protein belongs to the aldolase class II family. MtnB subfamily. Zn(2+) serves as cofactor.

The catalysed reaction is 5-(methylsulfanyl)-D-ribulose 1-phosphate = 5-methylsulfanyl-2,3-dioxopentyl phosphate + H2O. Its pathway is amino-acid biosynthesis; L-methionine biosynthesis via salvage pathway; L-methionine from S-methyl-5-thio-alpha-D-ribose 1-phosphate: step 2/6. Catalyzes the dehydration of methylthioribulose-1-phosphate (MTRu-1-P) into 2,3-diketo-5-methylthiopentyl-1-phosphate (DK-MTP-1-P). This Pseudomonas fluorescens (strain Pf0-1) protein is Methylthioribulose-1-phosphate dehydratase.